The sequence spans 414 residues: Lysosome-associated membrane glycoprotein 1 (414 aa).

An N-terminal signal peptide occupies residues 1 to 18; that stretch reads MGGAARAVLLGFLQASSS. The tract at residues 19–181 is first lumenal domain; that stretch reads FDVRDSTGKV…SANKTECRED (163 aa). Residues 19–379 are Lumenal-facing; it reads FDVRDSTGKV…EECQLDENNM (361 aa). A disulfide bond links Cys29 and Cys67. N-linked (GlcNAc...) asparagine glycosylation is found at Asn33, Asn58, Asn71, Asn90, Asn108, Asn117, Asn154, Asn159, Asn168, and Asn174. Cysteines 142 and 178 form a disulfide. The tract at residues 182–224 is hinge; it reads MVSTTTVAPTTPKHATSQVPTTSPAPTAAPSSPAVGKYNVTGA. Residues 186-213 are disordered; sequence TTVAPTTPKHATSQVPTTSPAPTAAPSS. The span at 196–213 shows a compositional bias: low complexity; sequence ATSQVPTTSPAPTAAPSS. Asn220, Asn225, Asn238, Asn259, Asn289, Asn301, and Asn319 each carry an N-linked (GlcNAc...) asparagine glycan. The second lumenal domain stretch occupies residues 225–379; sequence NGTCVLASMG…EECQLDENNM (155 aa). A disulfide bridge links Cys228 with Cys266. Cys335 and Cys372 are disulfide-bonded. The helical transmembrane segment at 380-403 threads the bilayer; it reads LIPIIVGAALAGLVLIVLIAYLIG. Over 404-414 the chain is Cytoplasmic; sequence RKRSHAGYQTI.

Belongs to the LAMP family.

It is found in the lysosome membrane. The protein resides in the endosome membrane. The protein localises to the late endosome membrane. It localises to the cell membrane. Its subcellular location is the cytolytic granule membrane. In terms of biological role, lysosomal membrane glycoprotein which plays an important role in lysosome biogenesis, lysosomal pH regulation, autophagy and cholesterol homeostasis. (Microbial infection) Plays an essential role in efficient replication and spread of Marek's disease virus, by facilitating viral cell-to-cell spread. The chain is Lysosome-associated membrane glycoprotein 1 (LAMP1) from Gallus gallus (Chicken).